Consider the following 86-residue polypeptide: Small ribosomal subunit protein bS16 (86 aa).

Belongs to the bacterial ribosomal protein bS16 family.

The protein is Small ribosomal subunit protein bS16 of Bordetella avium (strain 197N).